Reading from the N-terminus, the 405-residue chain is Arginine biosynthesis bifunctional protein ArgJ (405 aa).

Residues Thr152, Lys178, Thr189, Glu276, Asn400, and Thr405 each contribute to the substrate site. Thr189 (nucleophile) is an active-site residue.

Belongs to the ArgJ family. As to quaternary structure, heterotetramer of two alpha and two beta chains.

The protein localises to the cytoplasm. It catalyses the reaction N(2)-acetyl-L-ornithine + L-glutamate = N-acetyl-L-glutamate + L-ornithine. The catalysed reaction is L-glutamate + acetyl-CoA = N-acetyl-L-glutamate + CoA + H(+). Its pathway is amino-acid biosynthesis; L-arginine biosynthesis; L-ornithine and N-acetyl-L-glutamate from L-glutamate and N(2)-acetyl-L-ornithine (cyclic): step 1/1. The protein operates within amino-acid biosynthesis; L-arginine biosynthesis; N(2)-acetyl-L-ornithine from L-glutamate: step 1/4. In terms of biological role, catalyzes two activities which are involved in the cyclic version of arginine biosynthesis: the synthesis of N-acetylglutamate from glutamate and acetyl-CoA as the acetyl donor, and of ornithine by transacetylation between N(2)-acetylornithine and glutamate. This chain is Arginine biosynthesis bifunctional protein ArgJ, found in Pseudomonas syringae pv. tomato (strain ATCC BAA-871 / DC3000).